Here is a 397-residue protein sequence, read N- to C-terminus: Odorant receptor 22a (397 aa).

The Cytoplasmic portion of the chain corresponds to 1-49 (MLSKFFPHIKEKPLSERVKSRDAFIYLDRVMWSFGWTEPENKRWILPYK). The helical transmembrane segment at 50–70 (LWLAFVNIVMLILLPISISIE) threads the bilayer. Residues 71–86 (YLHRFKTFSAGEFLSS) lie on the Extracellular side of the membrane. The helical transmembrane segment at 87–107 (LEIGVNMYGSSFKCAFTLIGF) threads the bilayer. Over 108 to 136 (KKRQEAKVLLDQLDKRCLSDKERSTVHRY) the chain is Cytoplasmic. A helical membrane pass occupies residues 137-157 (VAMGNFFDILYHIFYSTFVVM). At 158-182 (NFPYFLLERRHAWRMYFPYIDSDEQ) the chain is on the extracellular side. A helical membrane pass occupies residues 183–203 (FYISSIAECFLMTEAIYMDLC). At 204-263 (TDVCPLISMLMARCHISLLKQRLRNLRSKPGRTEDEYLEELTECIRDHRLLLDYVDALRP) the chain is on the cytoplasmic side. Residues 264–280 (VFSGTIFVQFLLIGTVL) traverse the membrane as a helical segment. Over 281-286 (GLSMIN) the chain is Extracellular. Residues 287–304 (LMFFSTFWTGVATCLFMF) form a helical membrane-spanning segment. At 305-356 (DVSMETFPFCYLCNMIIDDCQEMSNCLFQSDWTSADRRYKSTLVYFLHNLQQ) the chain is on the cytoplasmic side. A helical transmembrane segment spans residues 357–377 (PITLTAGGVFPISMQTNLAMV). Topologically, residues 378-397 (KLAFSVVTVIKQFNLAERFQ) are extracellular.

The protein belongs to the insect chemoreceptor superfamily. Heteromeric odorant receptor channel (TC 1.A.69) family. Or2a subfamily. Interacts with Orco, via conserved C-terminal cytoplasmic loops. Complexes exist early in the endomembrane system in olfactory sensory neurons (OSNs), coupling these complexes to the conserved ciliary trafficking pathway. Interacts with snmp1. In terms of tissue distribution, expressed with Orco in 17-20 sensory neurons on the medial-proximal edge of the antenna. Expressed in the ab3A neuron which responds to ethyl butyrate.

The protein resides in the cell membrane. Odorant receptor which mediates acceptance or avoidance behavior, depending on its substrates. The odorant receptor repertoire encodes a large collection of odor stimuli that vary widely in identity, intensity, and duration. Involved in the behavioral responses ethyl butyrate and to esters in more general. Complexes with Orco to form odorant-sensing units, providing sensitive and prolonged odorant signaling and calcium permeability. They are necessary and sufficient to promote functional reconstitution of odor-evoked signaling in sensory neurons that normally respond only to carbon dioxide. The sequence is that of Odorant receptor 22a (Or22a) from Drosophila melanogaster (Fruit fly).